The following is a 524-amino-acid chain: MVAAMVAALRGPSRRFRPRTRALTRGTRGAASAAGGQQSFDLLVIGGGSGGLACAKEAAQLGKKVAVADYVEPSPRGTKWGLGGTCVNVGCIPKKLMHQAALLGGMIRDAHHYGWEVAQPVQHNWKTMAEAVQNHVKSLNWGHRVQLQDRKVKYFNIKASFVDEHTVRGVDKGGKATLLSAEHIVIATGGRPRYPTQVKGALEYGITSDDIFWLKESPGKTLVVGASYVALECAGFLTGIGLDTTVMMRSIPLRGFDQQMSSLVTEHMESHGTQFLKGCVPSHIKKLPTNQLQVTWEDHASGKEDTGTFDTVLWAIGRVPETRTLNLEKAGISTNPKNQKIIVDAQEATSVPHIYAIGDVAEGRPELTPTAIKAGKLLAQRLFGKSSTLMDYSNVPTTVFTPLEYGCVGLSEEEAVALHGQEHVEVYHAYYKPLEFTVADRDASQCYIKMVCMREPPQLVLGLHFLGPNAGEVTQGFALGIKCGASYAQVMQTVGIHPTCSEEVVKLHISKRSGLEPTVTGCUG.

The transit peptide at Met1 to Ala34 directs the protein to the mitochondrion. Asp41–Tyr70 contacts FAD. Position 79 is an N6-succinyllysine (Lys79). Cys86 and Cys91 are oxidised to a cystine. N6-succinyllysine is present on residues Lys175 and Lys329. Residue His497 is the Proton acceptor of the active site. The segment at residues Cys522–Sec523 is a cross-link (cysteinyl-selenocysteine (Cys-Sec)). Position 523 (Sec523) is a non-standard amino acid, selenocysteine.

The protein belongs to the class-I pyridine nucleotide-disulfide oxidoreductase family. Homodimer. FAD is required as a cofactor. In terms of tissue distribution, expressed in liver, heart, testis and kidney.

The protein localises to the mitochondrion. The enzyme catalyses [thioredoxin]-dithiol + NADP(+) = [thioredoxin]-disulfide + NADPH + H(+). Its function is as follows. Involved in the control of reactive oxygen species levels and the regulation of mitochondrial redox homeostasis. Maintains thioredoxin in a reduced state. May play a role in redox-regulated cell signaling. The protein is Thioredoxin reductase 2, mitochondrial of Mus musculus (Mouse).